The sequence spans 260 residues: Small ribosomal subunit protein uS2 (260 aa).

It belongs to the universal ribosomal protein uS2 family.

This Staphylococcus carnosus (strain TM300) protein is Small ribosomal subunit protein uS2.